The primary structure comprises 201 residues: Dephospho-CoA kinase (201 aa).

Residues 3 to 201 (ILGLTGGIGS…QIDSRVGCKI (199 aa)) form the DPCK domain. 11–16 (GSGKSL) provides a ligand contact to ATP.

Belongs to the CoaE family.

It is found in the cytoplasm. The enzyme catalyses 3'-dephospho-CoA + ATP = ADP + CoA + H(+). It functions in the pathway cofactor biosynthesis; coenzyme A biosynthesis; CoA from (R)-pantothenate: step 5/5. Functionally, catalyzes the phosphorylation of the 3'-hydroxyl group of dephosphocoenzyme A to form coenzyme A. The protein is Dephospho-CoA kinase of Ehrlichia ruminantium (strain Welgevonden).